The sequence spans 590 residues: MATQHIENKLKLLPDLPGCYMMKDINSRIIYVGKAKNLKNRVRSYFKSSHEGKTAKLVSEIRNFETIITSTDKEAFLLEITLIQKHKPYYNIKLKRGTGYPYIKITHEKDPQLKIVSQVKKDGGYYFGPYPNVYAATETLQLLQKVYPLRRCNGYQKRPCLYYHMGQCLGACFKEVPQSEYEKQIKKIKSFLNGNVSKIKKELEQKMETASENLEFERAAEIRDQIHYVEMTVEKQKIISNDNTPRDLFAFYMNKGWLSLQIFSIRQARLMKREKRLFPCIDTPEAELESFILQFYNQKNRILPKEILVPSGMDKETLSEILGIPVKTPQRGQKRDLLEMAQKNARLVLEEKFRLLELDERKTTGAMNEITDALGLPNGHRIEAFDHSHLQGEDLVSAMVCFIDGKPEKTEYRKYKLKNVDHADEAASTREVIYRRYSRLLKEKANLPDLILMDGASIQINAAVDVLHNQLGIDIPVAGMVKNDRHKTADLMTENDEKIGLDPKSEGFYLLQRIQDEVHRFAITFHRQVRSKNSLASRLERIQGVGPKTRIKLLRNYGSLKNISAASVEDLESLGISKKVAQTIKLSLKN.

The region spanning 15-92 (DLPGCYMMKD…IQKHKPYYNI (78 aa)) is the GIY-YIG domain. The 36-residue stretch at 197–232 (SKIKKELEQKMETASENLEFERAAEIRDQIHYVEMT) folds into the UVR domain.

The protein belongs to the UvrC family. As to quaternary structure, interacts with UvrB in an incision complex.

The protein resides in the cytoplasm. In terms of biological role, the UvrABC repair system catalyzes the recognition and processing of DNA lesions. UvrC both incises the 5' and 3' sides of the lesion. The N-terminal half is responsible for the 3' incision and the C-terminal half is responsible for the 5' incision. The protein is UvrABC system protein C of Ligilactobacillus salivarius (strain UCC118) (Lactobacillus salivarius).